A 414-amino-acid chain; its full sequence is MTQSTSVSKGGRVSRKAKKNPDGTMSIVDHLRELRTRLLRALAAIAVTTIIGFIWYEHGIPAWAIGPLHVPRLPSLGEILKEPYCSLPPSARATFSADNECRLLATSPFEMFMLRMKMGGLAGLVMACPIWLIEIWRFITPGLLKNERRWTLSVGTIAGFLFVLGVVAAYLVLPMGLDVLLHLGDSTQISALTGEKYFNFVIALILVFGLSFEVPLFTAMLNLAGVVHYEQLKDKRRIMIVVIFIFAAIATPGQDPISMLVLALTLVVLMELALQFTRIHDRRAARHVSEWEGLSDDEASPLKVAPSSIPAAESIYDGDHKGIAGGGDAHPAGGSGPIPKPSPVTAPTRAPSASESPTPTPSPAPSDSPTSGSHHAPPAAVLRRGPRSWNDSTGDNDGKPGQDTIQSSSFDDVL.

The tract at residues M1–P21 is disordered. 6 helical membrane passes run I45 to I65, G119 to I139, I157 to L177, F200 to M220, I238 to S258, and M259 to I279. The disordered stretch occupies residues I315–L414. The span at I323–G336 shows a compositional bias: gly residues. Over residues T345 to P357 the composition is skewed to low complexity. Residues D403–L414 show a composition bias toward polar residues.

It belongs to the TatC family. In terms of assembly, the Tat system comprises two distinct complexes: a TatABC complex, containing multiple copies of TatA, TatB and TatC subunits, and a separate TatA complex, containing only TatA subunits. Substrates initially bind to the TatABC complex, which probably triggers association of the separate TatA complex to form the active translocon.

It is found in the cell membrane. Its function is as follows. Part of the twin-arginine translocation (Tat) system that transports large folded proteins containing a characteristic twin-arginine motif in their signal peptide across membranes. Together with TatB, TatC is part of a receptor directly interacting with Tat signal peptides. The polypeptide is Sec-independent protein translocase protein TatC (Corynebacterium kroppenstedtii (strain DSM 44385 / JCM 11950 / CIP 105744 / CCUG 35717)).